The sequence spans 801 residues: Cadherin-20 (801 aa).

Residues 1–34 form the signal peptide; sequence MWTSGRMSNAKNWLGLGMSLYFWGLMDLTTTVLS. A propeptide spanning residues 35–59 is cleaved from the precursor; it reads DTPTPQGELEALLSDKPQSHQRTKR. At 60–619 the chain is on the extracellular side; that stretch reads SWVWNQFFVL…AYMLPVSLSR (560 aa). Cadherin domains follow at residues 61–165, 166–274, 275–389, 390–494, and 494–610; these read WVWN…EPKF, LDGP…PPRF, PQKH…PPVF, EPGF…APEF, and FPRF…SPEA. N261 is a glycosylation site (N-linked (GlcNAc...) asparagine). 3 N-linked (GlcNAc...) asparagine glycosylation sites follow: N420, N461, and N542. The helical transmembrane segment at 620-640 threads the bilayer; the sequence is GALIAILACIFVLLVLVLLIL. Residues 641–801 are Cytoplasmic-facing; sequence SMRRHRKQPY…GASEGPAPLW (161 aa).

In terms of tissue distribution, expressed in placenta, adult brain, and fetal brain.

Its subcellular location is the cell membrane. Its function is as follows. Cadherins are calcium-dependent cell adhesion proteins. They preferentially interact with themselves in a homophilic manner in connecting cells; cadherins may thus contribute to the sorting of heterogeneous cell types. In Homo sapiens (Human), this protein is Cadherin-20 (CDH20).